Consider the following 229-residue polypeptide: Small ribosomal subunit protein uS5 (229 aa).

The 64-residue stretch at 61–124 (LEEQVLDVKL…AHAKLSLIKV (64 aa)) folds into the S5 DRBM domain.

The protein belongs to the universal ribosomal protein uS5 family. In terms of assembly, part of the 30S ribosomal subunit. Contacts protein S4.

Functionally, with S4 and S12 plays an important role in translational accuracy. The chain is Small ribosomal subunit protein uS5 from Methanococcus maripaludis (strain C7 / ATCC BAA-1331).